A 364-amino-acid chain; its full sequence is tRNA 2-selenouridine synthase (364 aa).

Residues 14–137 (LIADTPIIDV…LRQTAIQATI (124 aa)) form the Rhodanese domain. Catalysis depends on Cys-97, which acts as the S-selanylcysteine intermediate.

It belongs to the SelU family. In terms of assembly, monomer.

It carries out the reaction 5-methylaminomethyl-2-thiouridine(34) in tRNA + selenophosphate + (2E)-geranyl diphosphate + H2O + H(+) = 5-methylaminomethyl-2-selenouridine(34) in tRNA + (2E)-thiogeraniol + phosphate + diphosphate. The catalysed reaction is 5-methylaminomethyl-2-thiouridine(34) in tRNA + (2E)-geranyl diphosphate = 5-methylaminomethyl-S-(2E)-geranyl-thiouridine(34) in tRNA + diphosphate. The enzyme catalyses 5-methylaminomethyl-S-(2E)-geranyl-thiouridine(34) in tRNA + selenophosphate + H(+) = 5-methylaminomethyl-2-(Se-phospho)selenouridine(34) in tRNA + (2E)-thiogeraniol. It catalyses the reaction 5-methylaminomethyl-2-(Se-phospho)selenouridine(34) in tRNA + H2O = 5-methylaminomethyl-2-selenouridine(34) in tRNA + phosphate. Functionally, involved in the post-transcriptional modification of the uridine at the wobble position (U34) of tRNA(Lys), tRNA(Glu) and tRNA(Gln). Catalyzes the conversion of 2-thiouridine (S2U-RNA) to 2-selenouridine (Se2U-RNA). Acts in a two-step process involving geranylation of 2-thiouridine (S2U) to S-geranyl-2-thiouridine (geS2U) and subsequent selenation of the latter derivative to 2-selenouridine (Se2U) in the tRNA chain. This chain is tRNA 2-selenouridine synthase, found in Shigella dysenteriae serotype 1 (strain Sd197).